A 162-amino-acid polypeptide reads, in one-letter code: Corticoliberin (162 aa).

The first 24 residues, 1-24 (MKFQLWVSTGILLVSLLPCHECRA), serve as a signal peptide directing secretion. A propeptide spanning residues 25 to 119 (FIKSPASSPG…QEDPTEKAKR (95 aa)) is cleaved from the precursor. Positions 91–122 (SQPGMRAASLDGADSPYSAQEDPTEKAKRAEE) are disordered. Residues 113–122 (PTEKAKRAEE) show a composition bias toward basic and acidic residues. Isoleucine 160 carries the post-translational modification Isoleucine amide.

It belongs to the sauvagine/corticotropin-releasing factor/urotensin I family.

It is found in the secreted. Functionally, this hormone from hypothalamus regulates the release of corticotropin from pituitary gland. The protein is Corticoliberin (crh) of Xenopus laevis (African clawed frog).